Reading from the N-terminus, the 324-residue chain is Fructose-1,6-bisphosphatase class 1 (324 aa).

Mg(2+) contacts are provided by Glu-88, Asp-107, Leu-109, and Asp-110. Substrate contacts are provided by residues 110 to 113, Asn-199, and Lys-265; that span reads DGSS. Position 271 (Glu-271) interacts with Mg(2+).

The protein belongs to the FBPase class 1 family. In terms of assembly, homotetramer. Mg(2+) is required as a cofactor.

The protein resides in the cytoplasm. The catalysed reaction is beta-D-fructose 1,6-bisphosphate + H2O = beta-D-fructose 6-phosphate + phosphate. It participates in carbohydrate biosynthesis; gluconeogenesis. The protein is Fructose-1,6-bisphosphatase class 1 of Neisseria meningitidis serogroup B (strain ATCC BAA-335 / MC58).